Consider the following 715-residue polypeptide: Fatty acid oxidation complex subunit alpha (715 aa).

The enoyl-CoA hydratase/isomerase stretch occupies residues Met1–Ala190. Asp297 is a binding site for substrate. Positions His312–Asn715 are 3-hydroxyacyl-CoA dehydrogenase. NAD(+) contacts are provided by residues Met325, Asp344, Val401–Glu403, Lys408, and Ser430. His451 acts as the For 3-hydroxyacyl-CoA dehydrogenase activity in catalysis. Asn454 lines the NAD(+) pocket. The substrate site is built by Asn501 and Tyr660.

In the N-terminal section; belongs to the enoyl-CoA hydratase/isomerase family. This sequence in the C-terminal section; belongs to the 3-hydroxyacyl-CoA dehydrogenase family. Heterotetramer of two alpha chains (FadB) and two beta chains (FadA).

The catalysed reaction is a (3S)-3-hydroxyacyl-CoA + NAD(+) = a 3-oxoacyl-CoA + NADH + H(+). The enzyme catalyses a (3S)-3-hydroxyacyl-CoA = a (2E)-enoyl-CoA + H2O. It catalyses the reaction a 4-saturated-(3S)-3-hydroxyacyl-CoA = a (3E)-enoyl-CoA + H2O. It carries out the reaction (3S)-3-hydroxybutanoyl-CoA = (3R)-3-hydroxybutanoyl-CoA. The catalysed reaction is a (3Z)-enoyl-CoA = a 4-saturated (2E)-enoyl-CoA. The enzyme catalyses a (3E)-enoyl-CoA = a 4-saturated (2E)-enoyl-CoA. Its pathway is lipid metabolism; fatty acid beta-oxidation. Its function is as follows. Involved in the aerobic and anaerobic degradation of long-chain fatty acids via beta-oxidation cycle. Catalyzes the formation of 3-oxoacyl-CoA from enoyl-CoA via L-3-hydroxyacyl-CoA. It can also use D-3-hydroxyacyl-CoA and cis-3-enoyl-CoA as substrate. The chain is Fatty acid oxidation complex subunit alpha from Pseudomonas putida (strain ATCC 700007 / DSM 6899 / JCM 31910 / BCRC 17059 / LMG 24140 / F1).